The primary structure comprises 625 residues: Clathrin interactor 1 (625 aa).

Positions 16 to 149 constitute an ENTH domain; that stretch reads NVVMNYSEIE…QDDDRLREER (134 aa). Position 29 (Arg29) interacts with a 1,2-diacyl-sn-glycero-3-phospho-(1D-myo-inositol-4,5-bisphosphate). Positions 52 to 54 are interaction with VTI1B; sequence FMY. Residue Arg67 participates in a 1,2-diacyl-sn-glycero-3-phospho-(1D-myo-inositol-4,5-bisphosphate) binding. 2 interaction with VTI1B regions span residues 94–96 and 142–153; these read SER and DDRLREERKKAK. Phosphoserine occurs at positions 163, 166, 173, 205, 210, 227, 245, and 299. The tract at residues 219–331 is disordered; it reads FRRKDREDSP…SSGDLVDLFD (113 aa). Residues 222–239 are compositionally biased toward basic and acidic residues; it reads KDREDSPERCSDSDEEKK. Residue Thr308 is modified to Phosphothreonine. Low complexity predominate over residues 308-323; it reads TPQSSVKTSVPSSKSS. Ser312 carries the phosphoserine modification. The interval 340 to 352 is interaction with AP1G1, AP1G2 and GGA2; it reads SADLFGGFADFGS. The tract at residues 368–380 is interaction with AP1G1 and AP1G2; that stretch reads GNGDFGDWSAFNQ. At Ser624 the chain carries Phosphoserine.

Belongs to the epsin family. Binds clathrin heavy chain and AP-2. Interacts with VTI1B. Interacts with GGA2 (via GAE domain). Interacts with AP1G1 (via GAE domain). Interacts with AP1G2 (via GAE domain). Ubiquitously expressed at low to intermediate levels.

Its subcellular location is the cytoplasm. The protein resides in the perinuclear region. It localises to the membrane. The protein localises to the cytoplasmic vesicle. It is found in the clathrin-coated vesicle. Functionally, binds to membranes enriched in phosphatidylinositol 4,5-bisphosphate (PtdIns(4,5)P2). May have a role in transport via clathrin-coated vesicles from the trans-Golgi network to endosomes. Stimulates clathrin assembly. In Homo sapiens (Human), this protein is Clathrin interactor 1 (CLINT1).